A 704-amino-acid chain; its full sequence is SH3KBP1-binding protein 1 (704 aa).

Alanine 2 carries the post-translational modification N-acetylalanine. In terms of domain architecture, BTB spans 19–88 (EVIHLNVGGK…LRTKELDPRG (70 aa)). A disordered region spans residues 146-165 (VGPQQIGGRPAPVRRSNTMP). Threonine 163 bears the Phosphothreonine mark. 5 WD repeats span residues 233-280 (RLDW…GGSE), 283-322 (VFHL…WQVQ), 324-359 (VQPI…LRMK), 428-466 (VHRS…GMIS), and 548-586 (LECE…DGLG). Positions 609–704 (PLASSRGSFP…LKKTLNETSF (96 aa)) are disordered. Over residues 612–631 (SSRGSFPSPSPRTSLTSLHS) the composition is skewed to low complexity. Positions 618–623 (PSPSPR) match the PXXXPR motif. Phosphoserine occurs at positions 644 and 646. Positions 678–683 (PTPAPR) match the PXXXPR motif. Residue threonine 693 is modified to Phosphothreonine.

The protein belongs to the KCTD3 family. As to quaternary structure, monomer. Interacts with CUL3; interaction is direct and forms a 5:5 heterodecamer. Interacts (via PXXXPR motifs) with SH3KBP1 (via SH3 domains). Directly interacts with cathepsin B/CTSB.

The protein localises to the lysosome. Functionally, inhibits CBL-SH3KBP1 complex mediated down-regulation of EGFR signaling by sequestration of SH3KBP1. Binds to SH3KBP1 and prevents its interaction with CBL and inhibits translocation of SH3KBP1 to EGFR containing vesicles upon EGF stimulation. The sequence is that of SH3KBP1-binding protein 1 (Shkbp1) from Mus musculus (Mouse).